The following is a 299-amino-acid chain: Oxaloacetate decarboxylase (299 aa).

Ser57 lines the substrate pocket. Asp95 serves as a coordination point for Mg(2+). The substrate site is built by Arg167 and His243.

It belongs to the isocitrate lyase/PEP mutase superfamily. Oxaloacetate decarboxylase family. In terms of assembly, homotetramer; dimer of dimers. It depends on Mg(2+) as a cofactor.

It catalyses the reaction oxaloacetate + H(+) = pyruvate + CO2. In terms of biological role, catalyzes the decarboxylation of oxaloacetate into pyruvate. Seems to play a role in maintaining cellular concentrations of bicarbonate and pyruvate. This chain is Oxaloacetate decarboxylase, found in Paraburkholderia xenovorans (strain LB400).